A 153-amino-acid polypeptide reads, in one-letter code: Superoxide dismutase [Cu-Zn] (153 aa).

Cu cation is bound by residues histidine 46, histidine 48, and histidine 63. Cysteine 57 and cysteine 146 are disulfide-bonded. Zn(2+) contacts are provided by histidine 63, histidine 71, histidine 80, and aspartate 83. Histidine 120 lines the Cu cation pocket.

This sequence belongs to the Cu-Zn superoxide dismutase family. Homodimer. It depends on Cu cation as a cofactor. Zn(2+) serves as cofactor.

It localises to the cytoplasm. The catalysed reaction is 2 superoxide + 2 H(+) = H2O2 + O2. Destroys radicals which are normally produced within the cells and which are toxic to biological systems. The protein is Superoxide dismutase [Cu-Zn] (SODCC) of Solidago canadensis var. scabra (Tall goldenrod).